A 201-amino-acid polypeptide reads, in one-letter code: Holliday junction branch migration complex subunit RuvA (201 aa).

The segment at 1–64 (MIGRLRGTLA…EDAQLLYGFA (64 aa)) is domain I. A domain II region spans residues 65 to 143 (EKRERELFRE…AWESMPAIAT (79 aa)). Residues 144–152 (LVVEPGSKT) are flexible linker. The interval 153-201 (AVTSAENDAVSALISLGFKPQEASRAVSAIQEENLSSEEMIRRALKGMV) is domain III.

It belongs to the RuvA family. As to quaternary structure, homotetramer. Forms an RuvA(8)-RuvB(12)-Holliday junction (HJ) complex. HJ DNA is sandwiched between 2 RuvA tetramers; dsDNA enters through RuvA and exits via RuvB. An RuvB hexamer assembles on each DNA strand where it exits the tetramer. Each RuvB hexamer is contacted by two RuvA subunits (via domain III) on 2 adjacent RuvB subunits; this complex drives branch migration. In the full resolvosome a probable DNA-RuvA(4)-RuvB(12)-RuvC(2) complex forms which resolves the HJ.

It is found in the cytoplasm. In terms of biological role, the RuvA-RuvB-RuvC complex processes Holliday junction (HJ) DNA during genetic recombination and DNA repair, while the RuvA-RuvB complex plays an important role in the rescue of blocked DNA replication forks via replication fork reversal (RFR). RuvA specifically binds to HJ cruciform DNA, conferring on it an open structure. The RuvB hexamer acts as an ATP-dependent pump, pulling dsDNA into and through the RuvAB complex. HJ branch migration allows RuvC to scan DNA until it finds its consensus sequence, where it cleaves and resolves the cruciform DNA. This Stutzerimonas stutzeri (strain A1501) (Pseudomonas stutzeri) protein is Holliday junction branch migration complex subunit RuvA.